The primary structure comprises 44 residues: uncharacterized protein (44 aa).

This is an uncharacterized protein from Bacillus subtilis (strain 168).